Reading from the N-terminus, the 359-residue chain is Phospho-N-acetylmuramoyl-pentapeptide-transferase (359 aa).

The next 10 membrane-spanning stretches (helical) occupy residues 3-23 (QILI…PALI), 55-75 (VAII…GLAF), 80-100 (ISAS…VGFL), 117-137 (TAKT…ALGF), 156-176 (IATV…VVSA), 187-207 (LDGL…LITF), 231-251 (LAIV…WNAA), 255-275 (IFMG…ISVT), 280-300 (ILAV…VLQI), and 334-354 (FWLL…GEWL).

The protein belongs to the glycosyltransferase 4 family. MraY subfamily. Mg(2+) serves as cofactor.

It is found in the cell membrane. The catalysed reaction is UDP-N-acetyl-alpha-D-muramoyl-L-alanyl-gamma-D-glutamyl-meso-2,6-diaminopimeloyl-D-alanyl-D-alanine + di-trans,octa-cis-undecaprenyl phosphate = di-trans,octa-cis-undecaprenyl diphospho-N-acetyl-alpha-D-muramoyl-L-alanyl-D-glutamyl-meso-2,6-diaminopimeloyl-D-alanyl-D-alanine + UMP. The protein operates within cell wall biogenesis; peptidoglycan biosynthesis. In terms of biological role, catalyzes the initial step of the lipid cycle reactions in the biosynthesis of the cell wall peptidoglycan: transfers peptidoglycan precursor phospho-MurNAc-pentapeptide from UDP-MurNAc-pentapeptide onto the lipid carrier undecaprenyl phosphate, yielding undecaprenyl-pyrophosphoryl-MurNAc-pentapeptide, known as lipid I. The sequence is that of Phospho-N-acetylmuramoyl-pentapeptide-transferase from Mycobacterium avium (strain 104).